A 115-amino-acid polypeptide reads, in one-letter code: Iron-sulfur cluster insertion protein ErpA (115 aa).

Iron-sulfur cluster contacts are provided by Cys42, Cys106, and Cys108.

The protein belongs to the HesB/IscA family. As to quaternary structure, homodimer. Iron-sulfur cluster serves as cofactor.

Functionally, required for insertion of 4Fe-4S clusters for at least IspG. The chain is Iron-sulfur cluster insertion protein ErpA from Baumannia cicadellinicola subsp. Homalodisca coagulata.